A 249-amino-acid polypeptide reads, in one-letter code: Hydroxyacylglutathione hydrolase (249 aa).

Positions 54, 56, 58, 59, 113, 138, and 176 each coordinate Zn(2+).

This sequence belongs to the metallo-beta-lactamase superfamily. Glyoxalase II family. As to quaternary structure, monomer. It depends on Zn(2+) as a cofactor.

The enzyme catalyses an S-(2-hydroxyacyl)glutathione + H2O = a 2-hydroxy carboxylate + glutathione + H(+). Its pathway is secondary metabolite metabolism; methylglyoxal degradation; (R)-lactate from methylglyoxal: step 2/2. In terms of biological role, thiolesterase that catalyzes the hydrolysis of S-D-lactoyl-glutathione to form glutathione and D-lactic acid. In Synechococcus sp. (strain CC9605), this protein is Hydroxyacylglutathione hydrolase.